We begin with the raw amino-acid sequence, 123 residues long: UPF0102 protein CLK_1817 (123 aa).

Belongs to the UPF0102 family.

This chain is UPF0102 protein CLK_1817, found in Clostridium botulinum (strain Loch Maree / Type A3).